We begin with the raw amino-acid sequence, 346 residues long: Histidinol-phosphate aminotransferase (346 aa).

The residue at position 209 (Lys209) is an N6-(pyridoxal phosphate)lysine.

It belongs to the class-II pyridoxal-phosphate-dependent aminotransferase family. Histidinol-phosphate aminotransferase subfamily. Homodimer. Pyridoxal 5'-phosphate is required as a cofactor.

The enzyme catalyses L-histidinol phosphate + 2-oxoglutarate = 3-(imidazol-4-yl)-2-oxopropyl phosphate + L-glutamate. Its pathway is amino-acid biosynthesis; L-histidine biosynthesis; L-histidine from 5-phospho-alpha-D-ribose 1-diphosphate: step 7/9. The protein is Histidinol-phosphate aminotransferase of Aliivibrio fischeri (strain MJ11) (Vibrio fischeri).